Consider the following 256-residue polypeptide: Small ribosomal subunit protein uS2 (256 aa).

It belongs to the universal ribosomal protein uS2 family.

The protein is Small ribosomal subunit protein uS2 of Streptococcus agalactiae serotype Ia (strain ATCC 27591 / A909 / CDC SS700).